Consider the following 637-residue polypeptide: Threonine--tRNA ligase (637 aa).

Residues 1 to 61 enclose the TGS domain; it reads MVTVTLPDGS…DADAQLAIVT (61 aa). The interval 244–535 is catalytic; sequence DHRRLAKQLD…LIEHHAGNFP (292 aa). Zn(2+) is bound by residues C335, H386, and H512.

It belongs to the class-II aminoacyl-tRNA synthetase family. Homodimer. Requires Zn(2+) as cofactor.

The protein localises to the cytoplasm. The catalysed reaction is tRNA(Thr) + L-threonine + ATP = L-threonyl-tRNA(Thr) + AMP + diphosphate + H(+). Functionally, catalyzes the attachment of threonine to tRNA(Thr) in a two-step reaction: L-threonine is first activated by ATP to form Thr-AMP and then transferred to the acceptor end of tRNA(Thr). Also edits incorrectly charged L-seryl-tRNA(Thr). In Thiobacillus denitrificans (strain ATCC 25259 / T1), this protein is Threonine--tRNA ligase.